Here is a 1821-residue protein sequence, read N- to C-terminus: MRPRTKARSPGRALRNPWRGFLPLTLALFVGAGHAQRDPVGRYEPAGGDANRLRRPGGSYPAAAAAKVYSLFREQDAPVAGLQPVERAQPGWGSPRRPTEAEARRPSRAQQSRRVQPPAQTRRSTPLGQQQPAPRTRAAPALPRLGTPQRSGAAPPTPPRGRLTGRNVCGGQCCPGWTTANSTNHCIKPVCEPPCQNRGSCSRPQLCVCRSGFRGARCEEVIPDEEFDPQNSRLAPRRWAERSPNLRRSSAAGEGTLARAQPPAPQSPPAPQSPPAGTLSGLSQTHPSQQHVGLSRTVRLHPTATASSQLSSNALPPGPGLEQRDGTQQAVPLEHPSSPWGLNLTEKIKKIKIVFTPTICKQTCARGHCANSCERGDTTTLYSQGGHGHDPKSGFRIYFCQIPCLNGGRCIGRDECWCPANSTGKFCHLPIPQPDREPPGRGSRPRALLEAPLKQSTFTLPLSNQLASVNPSLVKVHIHHPPEASVQIHQVAQVRGGVEEALVENSVETRPPPWLPASPGHSLWDSNNIPARSGEPPRPLPPAAPRPRGLLGRCYLNTVNGQCANPLLELTTQEDCCGSVGAFWGVTLCAPCPPRPASPVIENGQLECPQGYKRLNLTHCQDINECLTLGLCKDAECVNTRGSYLCTCRPGLMLDPSRSRCVSDKAISMLQGLCYRSLGPGTCTLPLAQRITKQICCCSRVGKAWGSECEKCPLPGTEAFREICPAGHGYTYASSDIRLSMRKAEEEELARPPREQGQRSSGALPGPAERQPLRVVTDTWLEAGTIPDKGDSQAGQVTTSVTHAPAWVTGNATTPPMPEQGIAEIQEEQVTPSTDVLVTLSTPGIDRCAAGATNVCGPGTCVNLPDGYRCVCSPGYQLHPSQAYCTDDNECLRDPCKGKGRCINRVGSYSCFCYPGYTLATSGATQECQDINECEQPGVCSGGQCTNTEGSYHCECDQGYIMVRKGHCQDINECRHPGTCPDGRCVNSPGSYTCLACEEGYRGQSGSCVDVNECLTPGVCAHGKCTNLEGSFRCSCEQGYEVTSDEKGCQDVDECASRASCPTGLCLNTEGSFACSACENGYWVNEDGTACEDLDECAFPGVCPSGVCTNTAGSFSCKDCDGGYRPSPLGDSCEDVDECEDPQSSCLGGECKNTVGSYQCLCPQGFQLANGTVCEDVNECMGEEHCAPHGECLNSHGSFFCLCAPGFVSAEGGTSCQDVDECATTDPCVGGHCVNTEGSFNCLCETGFQPSPESGECVDIDECEDYGDPVCGTWKCENSPGSYRCVLGCQPGFHMAPNGDCIDIDECANDTMCGSHGFCDNTDGSFRCLCDQGFEISPSGWDCVDVNECELMLAVCGAALCENVEGSFLCLCASDLEEYDAQEGHCRPRGAGGQSMSEAPTGDHAPAPTRMDCYSGQKGHAPCSSVLGRNTTQAECCCTQGASWGDACDLCPSEDSAEFSEICPSGKGYIPVEGAWTFGQTMYTDADECVIFGPGLCPNGRCLNTVPGYVCLCNPGFHYDASHKKCEDHDECQDLACENGECVNTEGSFHCFCSPPLTLDLSQQRCMNSTSSTEDLPDHDIHMDICWKKVTNDVCSEPLRGHRTTYTECCCQDGEAWSQQCALCPPRSSEVYAQLCNVARIEAEREAGVHFRPGYEYGPGPDDLHYSIYGPDGAPFYNYLGPEDTVPEPAFPNTAGHSADRTPILESPLQPSELQPHYVASHPEPPAGFEGLQAEECGILNGCENGRCVRVREGYTCDCFEGFQLDAAHMACVDVNECDDLNGPAVLCVHGYCENTEGSYRCHCSPGYVAEAGPPHCTAKE.

The signal sequence occupies residues 1 to 35 (MRPRTKARSPGRALRNPWRGFLPLTLALFVGAGHA). Disordered regions lie at residues 38–58 (DPVG…RPGG) and 81–165 (GLQP…RLTG). The segment at 94–115 (SPRRPTEAEARRPSRAQQSRRV) is heparin-binding. 2 stretches are compositionally biased toward low complexity: residues 108–120 (RAQQ…PPAQ) and 129–145 (QQQP…LPRL). Residue asparagine 181 is glycosylated (N-linked (GlcNAc...) asparagine). In terms of domain architecture, EGF-like 1 spans 187–219 (IKPVCEPPCQNRGSCSRPQLCVCRSGFRGARCE). 3 disulfide bridges follow: cysteine 191/cysteine 201, cysteine 195/cysteine 207, and cysteine 209/cysteine 218. Positions 229–339 (PQNSRLAPRR…AVPLEHPSSP (111 aa)) are disordered. The heparin-binding stretch occupies residues 232 to 249 (SRLAPRRWAERSPNLRRS). Pro residues predominate over residues 262–274 (PPAPQSPPAPQSP). Polar residues-rich tracts occupy residues 280–292 (SGLS…QQHV) and 304–314 (ATASSQLSSNA). The N-linked (GlcNAc...) asparagine glycan is linked to asparagine 343. 344–354 (LTEKIKKIKIV) is a heparin binding site. Positions 375 to 377 (RGD) match the Cell attachment site motif. Positions 396 to 428 (RIYFCQIPCLNGGRCIGRDECWCPANSTGKFCH) constitute an EGF-like 2 domain. 3 disulfide bridges follow: cysteine 400-cysteine 410, cysteine 404-cysteine 416, and cysteine 418-cysteine 427. N-linked (GlcNAc...) asparagine glycosylation occurs at asparagine 421. Serine 506 bears the Phosphoserine mark. A disordered region spans residues 510–544 (RPPPWLPASPGHSLWDSNNIPARSGEPPRPLPPAA). Residues 552-604 (GRCYLNTVNGQCANPLLELTTQEDCCGSVGAFWGVTLCAPCPPRPASPVIENG) enclose the TB 1 domain. 3 cysteine pairs are disulfide-bonded: cysteine 554/cysteine 576, cysteine 563/cysteine 589, and cysteine 577/cysteine 592. Asparagine 616 is a glycosylation site (N-linked (GlcNAc...) asparagine). The EGF-like 3; calcium-binding domain occupies 622 to 662 (DINECLTLGLCKDAECVNTRGSYLCTCRPGLMLDPSRSRCV). Cystine bridges form between cysteine 626–cysteine 637, cysteine 632–cysteine 646, cysteine 648–cysteine 661, cysteine 674–cysteine 696, cysteine 683–cysteine 709, cysteine 697–cysteine 712, and cysteine 698–cysteine 724. A TB 2 domain is found at 672-724 (GLCYRSLGPGTCTLPLAQRITKQICCCSRVGKAWGSECEKCPLPGTEAFREIC). A compositionally biased stretch (basic and acidic residues) spans 744 to 757 (AEEEELARPPREQG). The tract at residues 744-772 (AEEEELARPPREQGQRSSGALPGPAERQP) is disordered. Residue asparagine 811 is glycosylated (N-linked (GlcNAc...) asparagine). An EGF-like 4 domain is found at 844–886 (GIDRCAAGATNVCGPGTCVNLPDGYRCVCSPGYQLHPSQAYCT). Cystine bridges form between cysteine 848-cysteine 861, cysteine 856-cysteine 870, cysteine 872-cysteine 885, cysteine 891-cysteine 902, cysteine 896-cysteine 911, cysteine 913-cysteine 928, cysteine 934-cysteine 945, cysteine 940-cysteine 954, cysteine 956-cysteine 968, cysteine 974-cysteine 985, cysteine 980-cysteine 994, cysteine 997-cysteine 1008, cysteine 1014-cysteine 1025, cysteine 1020-cysteine 1034, cysteine 1036-cysteine 1049, cysteine 1055-cysteine 1066, cysteine 1061-cysteine 1075, cysteine 1078-cysteine 1091, cysteine 1097-cysteine 1108, cysteine 1103-cysteine 1117, cysteine 1120-cysteine 1133, cysteine 1139-cysteine 1151, cysteine 1146-cysteine 1160, cysteine 1162-cysteine 1174, cysteine 1180-cysteine 1192, cysteine 1186-cysteine 1201, cysteine 1203-cysteine 1216, cysteine 1222-cysteine 1233, cysteine 1228-cysteine 1242, cysteine 1244-cysteine 1257, cysteine 1263-cysteine 1276, cysteine 1271-cysteine 1285, cysteine 1289-cysteine 1301, cysteine 1307-cysteine 1319, cysteine 1313-cysteine 1328, cysteine 1330-cysteine 1343, cysteine 1349-cysteine 1361, cysteine 1356-cysteine 1370, cysteine 1372-cysteine 1386, cysteine 1413-cysteine 1436, cysteine 1423-cysteine 1448, cysteine 1437-cysteine 1451, cysteine 1438-cysteine 1463, cysteine 1489-cysteine 1502, cysteine 1497-cysteine 1511, cysteine 1513-cysteine 1526, cysteine 1532-cysteine 1542, cysteine 1537-cysteine 1551, and cysteine 1553-cysteine 1566. The EGF-like 5; calcium-binding domain maps to 887 to 929 (DDNECLRDPCKGKGRCINRVGSYSCFCYPGYTLATSGATQECQ). Residues 930–969 (DINECEQPGVCSGGQCTNTEGSYHCECDQGYIMVRKGHCQ) form the EGF-like 6; calcium-binding domain. The 40-residue stretch at 970–1009 (DINECRHPGTCPDGRCVNSPGSYTCLACEEGYRGQSGSCV) folds into the EGF-like 7; calcium-binding domain. The EGF-like 8; calcium-binding domain occupies 1010–1050 (DVNECLTPGVCAHGKCTNLEGSFRCSCEQGYEVTSDEKGCQ). The 42-residue stretch at 1051-1092 (DVDECASRASCPTGLCLNTEGSFACSACENGYWVNEDGTACE) folds into the EGF-like 9; calcium-binding domain. An EGF-like 10; calcium-binding domain is found at 1093–1134 (DLDECAFPGVCPSGVCTNTAGSFSCKDCDGGYRPSPLGDSCE). One can recognise an EGF-like 11; calcium-binding domain in the interval 1135–1175 (DVDECEDPQSSCLGGECKNTVGSYQCLCPQGFQLANGTVCE). The N-linked (GlcNAc...) asparagine glycan is linked to asparagine 1170. Positions 1176 to 1217 (DVNECMGEEHCAPHGECLNSHGSFFCLCAPGFVSAEGGTSCQ) constitute an EGF-like 12; calcium-binding domain. One can recognise an EGF-like 13; calcium-binding domain in the interval 1218–1258 (DVDECATTDPCVGGHCVNTEGSFNCLCETGFQPSPESGECV). The region spanning 1259–1302 (DIDECEDYGDPVCGTWKCENSPGSYRCVLGCQPGFHMAPNGDCI) is the EGF-like 14; calcium-binding domain. Positions 1303–1344 (DIDECANDTMCGSHGFCDNTDGSFRCLCDQGFEISPSGWDCV) constitute an EGF-like 15; calcium-binding domain. Asparagine 1309 carries N-linked (GlcNAc...) asparagine glycosylation. Residues 1345–1387 (DVNECELMLAVCGAALCENVEGSFLCLCASDLEEYDAQEGHCR) form the EGF-like 16; calcium-binding domain. The TB 3 domain maps to 1411–1463 (MDCYSGQKGHAPCSSVLGRNTTQAECCCTQGASWGDACDLCPSEDSAEFSEIC). Asparagine 1430 carries N-linked (GlcNAc...) asparagine glycosylation. The region spanning 1485 to 1527 (DADECVIFGPGLCPNGRCLNTVPGYVCLCNPGFHYDASHKKCE) is the EGF-like 17; calcium-binding domain. One can recognise an EGF-like 18; calcium-binding domain in the interval 1528 to 1567 (DHDECQDLACENGECVNTEGSFHCFCSPPLTLDLSQQRCM). Asparagine 1568 carries an N-linked (GlcNAc...) asparagine glycan. Residues 1584-1636 (DICWKKVTNDVCSEPLRGHRTTYTECCCQDGEAWSQQCALCPPRSSEVYAQLC) enclose the TB 4 domain. Cystine bridges form between cysteine 1586/cysteine 1609, cysteine 1595/cysteine 1621, cysteine 1610/cysteine 1624, cysteine 1611/cysteine 1636, cysteine 1737/cysteine 1748, cysteine 1743/cysteine 1757, cysteine 1759/cysteine 1772, cysteine 1778/cysteine 1793, cysteine 1788/cysteine 1802, and cysteine 1804/cysteine 1817. The tract at residues 1639–1821 (ARIEAEREAG…AGPPHCTAKE (183 aa)) is C-terminal domain. The EGF-like 19; calcium-binding domain maps to 1733 to 1773 (QAEECGILNGCENGRCVRVREGYTCDCFEGFQLDAAHMACV). One can recognise an EGF-like 20; calcium-binding domain in the interval 1774–1818 (DVNECDDLNGPAVLCVHGYCENTEGSYRCHCSPGYVAEAGPPHCT).

It belongs to the LTBP family. As to quaternary structure, forms part of the large latent transforming growth factor beta precursor complex; removal is essential for activation of complex. Interacts with SDC4. Interacts (via C-terminal domain) with FBN1 (via N-terminal domain) in a Ca(+2)-dependent manner. N-Glycosylated. In terms of processing, contains hydroxylated asparagine residues. Expressed in the aorta (at protein level). Expressed in lung, weakly expressed in heart, placenta, liver and skeletal muscle.

The protein localises to the secreted. It localises to the extracellular space. Its subcellular location is the extracellular matrix. Its function is as follows. May play an integral structural role in elastic-fiber architectural organization and/or assembly. This is Latent-transforming growth factor beta-binding protein 2 (LTBP2) from Homo sapiens (Human).